The primary structure comprises 190 residues: Movement protein (190 aa).

This sequence belongs to the tombusvirus/aureusvirus movement protein p22 family.

The protein resides in the host membrane. Transports viral genome to neighboring plant cells directly through plasmosdesmata, without any budding. The movement protein allows efficient cell to cell propagation, by bypassing the host cell wall barrier. The chain is Movement protein from Cucumber necrosis virus (CNV).